The primary structure comprises 156 residues: Small ribosomal subunit protein uS7 (156 aa).

It belongs to the universal ribosomal protein uS7 family. Part of the 30S ribosomal subunit. Contacts proteins S9 and S11.

Its function is as follows. One of the primary rRNA binding proteins, it binds directly to 16S rRNA where it nucleates assembly of the head domain of the 30S subunit. Is located at the subunit interface close to the decoding center, probably blocks exit of the E-site tRNA. In Buchnera aphidicola subsp. Acyrthosiphon pisum (strain Tuc7), this protein is Small ribosomal subunit protein uS7.